Reading from the N-terminus, the 137-residue chain is NADH-quinone oxidoreductase subunit A (137 aa).

Helical transmembrane passes span 12 to 32 (WGFA…LGLS), 66 to 86 (FYLV…LFAW), and 95 to 115 (WTGF…LVYL).

Belongs to the complex I subunit 3 family. As to quaternary structure, NDH-1 is composed of 13 different subunits. Subunits NuoA, H, J, K, L, M, N constitute the membrane sector of the complex.

The protein localises to the cell inner membrane. It carries out the reaction a quinone + NADH + 5 H(+)(in) = a quinol + NAD(+) + 4 H(+)(out). NDH-1 shuttles electrons from NADH, via FMN and iron-sulfur (Fe-S) centers, to quinones in the respiratory chain. The immediate electron acceptor for the enzyme in this species is believed to be ubiquinone. Couples the redox reaction to proton translocation (for every two electrons transferred, four hydrogen ions are translocated across the cytoplasmic membrane), and thus conserves the redox energy in a proton gradient. This chain is NADH-quinone oxidoreductase subunit A, found in Pseudomonas putida (strain ATCC 700007 / DSM 6899 / JCM 31910 / BCRC 17059 / LMG 24140 / F1).